We begin with the raw amino-acid sequence, 469 residues long: Trigger factor (469 aa).

The PPIase FKBP-type domain occupies 162–243; the sequence is GDFVSIDLSA…VKSVKERELP (82 aa). The segment at 429–469 is disordered; sequence NTIDTSEFFGKHAQSDKADQKTEEADPNSDAIDEEVDEAAE. The span at 437–452 shows a compositional bias: basic and acidic residues; sequence FGKHAQSDKADQKTEE. Over residues 453-469 the composition is skewed to acidic residues; the sequence is ADPNSDAIDEEVDEAAE.

The protein belongs to the FKBP-type PPIase family. Tig subfamily.

The protein localises to the cytoplasm. It carries out the reaction [protein]-peptidylproline (omega=180) = [protein]-peptidylproline (omega=0). Functionally, involved in protein export. Acts as a chaperone by maintaining the newly synthesized protein in an open conformation. Functions as a peptidyl-prolyl cis-trans isomerase. In Mycobacterium leprae (strain Br4923), this protein is Trigger factor.